The chain runs to 105 residues: MRGAHYVAIVLLVAAGGQTAAGFDQDEPQHAPDNGYMASVDLRNEFLQSRALQASRNPKDDLMFSAGDEERTPLARSNYLKKVTIPDSIINTANAMRMEGKQVRL.

The first 22 residues, 1-22 (MRGAHYVAIVLLVAAGGQTAAG), serve as a signal peptide directing secretion. The RxLR-dEER motif lies at 50 to 71 (RALQASRNPKDDLMFSAGDEER).

Belongs to the RxLR effector family.

It localises to the secreted. It is found in the host nucleus. Its subcellular location is the host cytoplasm. Functionally, secreted effector that partially suppresses the host cell death induced by cell death-inducing proteins. This Plasmopara viticola (Downy mildew of grapevine) protein is Secreted RxLR effector protein 158.